Consider the following 277-residue polypeptide: Kallikrein-13 (277 aa).

The first 16 residues, 1-16, serve as a signal peptide directing secretion; the sequence is MWPLALVIASLTLALS. Residue asparagine 30 is glycosylated (N-linked (GlcNAc...) asparagine). The 228-residue stretch at 36–263 folds into the Peptidase S1 domain; the sequence is LPGGYTCFPH…YVLWIRETIR (228 aa). 5 cysteine pairs are disulfide-bonded: cysteine 42–cysteine 178, cysteine 61–cysteine 77, cysteine 157–cysteine 224, cysteine 189–cysteine 203, and cysteine 214–cysteine 239. Residues histidine 76 and aspartate 124 each act as charge relay system in the active site. Serine 218 (charge relay system) is an active-site residue. N-linked (GlcNAc...) asparagine glycosylation is present at asparagine 225.

This sequence belongs to the peptidase S1 family. Kallikrein subfamily. As to expression, expressed in prostate, breast, testis and salivary gland.

It localises to the secreted. The protein is Kallikrein-13 (KLK13) of Homo sapiens (Human).